We begin with the raw amino-acid sequence, 345 residues long: MSYLIKPQNYKPLLDLKQTELGIKQIKEFFQLNLSSELRLRRVTAPLFVLKGMGINDDLNGIERPVSFPIKDLGDAQAEVVHSLAKWKRLTLADYHIEPGYGIYTDMNAIRSDEELGNLHSLYVDQWDWERVITAEDRNADFLKEIVNRIYAAMIRTEYMVYEMYPQIKPCLPQKLHFIHSEELRQLYPDMEPKCREHAICKKYGAVFIIGIGCKLSDGKKHDGRAPDYDDYTSKGLNDLPGLNGDLLLWDDVLQRSIELSSMGIRVDKEALLRQVKQENQEQRLELYFHKRLLNDTLPLSIGGGIGQSRLCMFYLRKAHIGEIQASIWPEEMRRECTALNIHLI.

This sequence belongs to the class-II aminoacyl-tRNA synthetase family. AsnA subfamily.

Its subcellular location is the cytoplasm. It catalyses the reaction L-aspartate + NH4(+) + ATP = L-asparagine + AMP + diphosphate + H(+). It functions in the pathway amino-acid biosynthesis; L-asparagine biosynthesis; L-asparagine from L-aspartate (ammonia route): step 1/1. In Bacteroides fragilis (strain ATCC 25285 / DSM 2151 / CCUG 4856 / JCM 11019 / LMG 10263 / NCTC 9343 / Onslow / VPI 2553 / EN-2), this protein is Aspartate--ammonia ligase.